The primary structure comprises 290 residues: ATP synthase gamma chain (290 aa).

The protein belongs to the ATPase gamma chain family. In terms of assembly, F-type ATPases have 2 components, CF(1) - the catalytic core - and CF(0) - the membrane proton channel. CF(1) has five subunits: alpha(3), beta(3), gamma(1), delta(1), epsilon(1). CF(0) has three main subunits: a, b and c.

The protein resides in the cell inner membrane. Functionally, produces ATP from ADP in the presence of a proton gradient across the membrane. The gamma chain is believed to be important in regulating ATPase activity and the flow of protons through the CF(0) complex. This Dinoroseobacter shibae (strain DSM 16493 / NCIMB 14021 / DFL 12) protein is ATP synthase gamma chain.